The sequence spans 61 residues: Photosystem II reaction center protein K (61 aa).

The propeptide occupies 1 to 24 (MLNIFSLICICINSALHSSSFFFA). The helical transmembrane segment at 40–60 (MPVIPVLFFLLALVWQAAVSF) threads the bilayer.

The protein belongs to the PsbK family. In terms of assembly, PSII is composed of 1 copy each of membrane proteins PsbA, PsbB, PsbC, PsbD, PsbE, PsbF, PsbH, PsbI, PsbJ, PsbK, PsbL, PsbM, PsbT, PsbX, PsbY, PsbZ, Psb30/Ycf12, at least 3 peripheral proteins of the oxygen-evolving complex and a large number of cofactors. It forms dimeric complexes.

The protein localises to the plastid. Its subcellular location is the chloroplast thylakoid membrane. Its function is as follows. One of the components of the core complex of photosystem II (PSII). PSII is a light-driven water:plastoquinone oxidoreductase that uses light energy to abstract electrons from H(2)O, generating O(2) and a proton gradient subsequently used for ATP formation. It consists of a core antenna complex that captures photons, and an electron transfer chain that converts photonic excitation into a charge separation. In Liriodendron tulipifera (Tuliptree), this protein is Photosystem II reaction center protein K.